Reading from the N-terminus, the 421-residue chain is AP-3 complex subunit mu (421 aa).

One can recognise an MHD domain in the interval 178–420; sequence QNKIFFDIIE…TTKAGKFQVR (243 aa).

It belongs to the adaptor complexes medium subunit family. In terms of assembly, adaptor protein complex 3 (AP-3) is a heterotetramer composed of two large adaptins (delta-type subunit and beta-type subunit), a medium adaptin (mu-type subunit) and a small adaptin (sigma-type subunit).

It is found in the endosome membrane. Part of the AP-3 complex, an adaptor-related complex which is essential for the compartmentalization of the endocytic pathway. The protein is AP-3 complex subunit mu (apm3) of Dictyostelium discoideum (Social amoeba).